A 195-amino-acid polypeptide reads, in one-letter code: Probable GTP-binding protein EngB (195 aa).

The 173-residue stretch at 22–194 (LKGEVAFVGR…LDLISTLLKE (173 aa)) folds into the EngB-type G domain. Residues 30 to 37 (GRSNVGKS), 56 to 60 (GKTRS), 74 to 77 (DLPG), 141 to 144 (TKMD), and 173 to 175 (TSS) each bind GTP. Mg(2+) is bound by residues serine 37 and threonine 58.

This sequence belongs to the TRAFAC class TrmE-Era-EngA-EngB-Septin-like GTPase superfamily. EngB GTPase family. The cofactor is Mg(2+).

Its function is as follows. Necessary for normal cell division and for the maintenance of normal septation. The sequence is that of Probable GTP-binding protein EngB from Thermotoga petrophila (strain ATCC BAA-488 / DSM 13995 / JCM 10881 / RKU-1).